The sequence spans 540 residues: Chaperonin GroEL 1 (540 aa).

Residues 29–32 (TLGP), 86–90 (DGTTT), Gly413, 478–480 (NAA), and Asp494 contribute to the ATP site.

This sequence belongs to the chaperonin (HSP60) family. In terms of assembly, forms a cylinder of 14 subunits composed of two heptameric rings stacked back-to-back. Interacts with the co-chaperonin GroES.

The protein resides in the cytoplasm. The enzyme catalyses ATP + H2O + a folded polypeptide = ADP + phosphate + an unfolded polypeptide.. In terms of biological role, together with its co-chaperonin GroES, plays an essential role in assisting protein folding. The GroEL-GroES system forms a nano-cage that allows encapsulation of the non-native substrate proteins and provides a physical environment optimized to promote and accelerate protein folding. The sequence is that of Chaperonin GroEL 1 from Mycobacterium sp. (strain JLS).